Here is a 131-residue protein sequence, read N- to C-terminus: Small ribosomal subunit protein uS8 (131 aa).

Belongs to the universal ribosomal protein uS8 family. As to quaternary structure, part of the 30S ribosomal subunit. Contacts proteins S5 and S12.

Functionally, one of the primary rRNA binding proteins, it binds directly to 16S rRNA central domain where it helps coordinate assembly of the platform of the 30S subunit. In Campylobacter jejuni subsp. jejuni serotype O:23/36 (strain 81-176), this protein is Small ribosomal subunit protein uS8.